Here is a 146-residue protein sequence, read N- to C-terminus: Hemoglobin subunit beta (146 aa).

Val1 carries the post-translational modification N-acetylvaline. The region spanning 2–146 (HLTGEEKSAV…VANALAHKYH (145 aa)) is the Globin domain. A Phosphothreonine modification is found at Thr12. Ser44 carries the post-translational modification Phosphoserine. The residue at position 59 (Lys59) is an N6-acetyllysine. His63 is a heme b binding site. Position 82 is an N6-acetyllysine (Lys82). His92 serves as a coordination point for heme b. At Cys93 the chain carries S-nitrosocysteine. Lys144 carries the post-translational modification N6-acetyllysine.

Belongs to the globin family. As to quaternary structure, heterotetramer of two alpha chains and two beta chains. As to expression, red blood cells.

In terms of biological role, involved in oxygen transport from the lung to the various peripheral tissues. This Saguinus oedipus (Cotton-top tamarin) protein is Hemoglobin subunit beta (HBB).